The primary structure comprises 302 residues: CASP-like protein 4A2 (302 aa).

The span at 1–13 shows a compositional bias: polar residues; sequence MALQAQQQATPSP. A disordered region spans residues 1-134; sequence MALQAQQQAT…APPPHAQVRS (134 aa). At 1 to 154 the chain is on the cytoplasmic side; the sequence is MALQAQQQAT…RKRRAAVMQR (154 aa). The span at 40–60 shows a compositional bias: low complexity; sequence VVVASTHHAAAAARYVPPRAT. Pro residues predominate over residues 99–129; it reads KTPPPAPPLPAAPPPPPAASPAPAPRAPPPH. The helical transmembrane segment at 155 to 175 threads the bilayer; that stretch reads AALLARAAAAGLCLAALAVLA. Residues 176-197 are Extracellular-facing; it reads SDTRRGWARDSYSNYAQFRYSE. The chain crosses the membrane as a helical span at residues 198–218; it reads AVNVVGFLYSVFQFVALAELM. The Cytoplasmic portion of the chain corresponds to 219–238; the sequence is RRNKHLIPHPKRDLFDFTMD. The helical transmembrane segment at 239–256 threads the bilayer; that stretch reads QVVAYLLISSSSSATARA. Over 257 to 273 the chain is Extracellular; the sequence is SDLIENWGSDSFPSMAN. The chain crosses the membrane as a helical span at residues 274–294; the sequence is GSIAISFVAFVVFAICSLISA. Topologically, residues 295-302 are cytoplasmic; it reads YNLFRRDM.

The protein belongs to the Casparian strip membrane proteins (CASP) family. In terms of assembly, homodimer and heterodimers.

It is found in the cell membrane. The polypeptide is CASP-like protein 4A2 (Zea mays (Maize)).